A 93-amino-acid polypeptide reads, in one-letter code: MPRSLKKGPFVDQHLFVKVARENDKGTKNVIKTWSRRSMIIPDMLGHTIAVHDGRKHIPVFVTESMVGHKLGEFAPTRTFRGHVKDDRKGKRR.

Belongs to the universal ribosomal protein uS19 family.

Functionally, protein S19 forms a complex with S13 that binds strongly to the 16S ribosomal RNA. The polypeptide is Small ribosomal subunit protein uS19 (Paenarthrobacter aurescens (strain TC1)).